We begin with the raw amino-acid sequence, 732 residues long: Translation initiation factor IF-2 (732 aa).

Residues 40–147 (PEVVEKLDHT…QQEQPMKKEK (108 aa)) are disordered. A compositionally biased stretch (basic and acidic residues) spans 42–67 (VVEKLDHTYNKKNERPQASAPKEKQK). Positions 90-103 (KVPKKKSANKKKEG) are enriched in basic residues. A compositionally biased stretch (basic and acidic residues) spans 104 to 117 (KKHDLQLQQQEKKI). Over residues 118–129 (FHQQKKKIKGKA) the composition is skewed to basic residues. The tr-type G domain occupies 233–402 (ERPPVVTIMG…LLVSEMEELK (170 aa)). A G1 region spans residues 242-249 (GHVDHGKT). Residue 242–249 (GHVDHGKT) participates in GTP binding. The interval 267-271 (GITQH) is G2. Residues 288–291 (DTPG) form a G3 region. GTP-binding positions include 288 to 292 (DTPGH) and 342 to 345 (NKMD). The interval 342–345 (NKMD) is G4. Residues 378–380 (SAK) are G5.

It belongs to the TRAFAC class translation factor GTPase superfamily. Classic translation factor GTPase family. IF-2 subfamily.

It localises to the cytoplasm. Its function is as follows. One of the essential components for the initiation of protein synthesis. Protects formylmethionyl-tRNA from spontaneous hydrolysis and promotes its binding to the 30S ribosomal subunits. Also involved in the hydrolysis of GTP during the formation of the 70S ribosomal complex. This chain is Translation initiation factor IF-2, found in Geobacillus sp. (strain WCH70).